A 212-amino-acid chain; its full sequence is Thymidylate kinase (212 aa).

Residue 10–17 (GLEGAGKT) participates in ATP binding.

It belongs to the thymidylate kinase family.

It catalyses the reaction dTMP + ATP = dTDP + ADP. Functionally, phosphorylation of dTMP to form dTDP in both de novo and salvage pathways of dTTP synthesis. The chain is Thymidylate kinase from Yersinia pseudotuberculosis serotype O:1b (strain IP 31758).